Reading from the N-terminus, the 141-residue chain is MTMACTACPTIWTLRCQTTCSNAFTGEALPHRHPRLAADAVNETRAIVQDVRNSILLSAASAWEIAINYRLGKLPPPEPSASYVPDRMRRCGTSPLSVDHAHTAHRRASGSPSTSIRPCAHRPGTAAWPDDHHRRRPVSCL.

Aspartate 99 is a Mg(2+) binding site. A disordered region spans residues 99–141; it reads DHAHTAHRRASGSPSTSIRPCAHRPGTAAWPDDHHRRRPVSCL.

This sequence belongs to the PINc/VapC protein family. Mg(2+) serves as cofactor.

Functionally, toxic component of a type II toxin-antitoxin (TA) system. An RNase. The cognate antitoxin is VapB16. This Mycobacterium tuberculosis (strain ATCC 25618 / H37Rv) protein is Ribonuclease VapC16.